An 895-amino-acid polypeptide reads, in one-letter code: Catenin alpha-3 (895 aa).

Serine 56 bears the Phosphoserine mark. A coiled-coil region spans residues 74-111 (EKIAQEATVLKDELTASLEEVRKESEALKVSAERFTDD). Serine 160 is subject to Phosphoserine. Residues 325 to 379 (RERIIAECNAIRQALQDLLSEYMNNAGKKERSNTLNIALDNMCKKTRDLRRQLRK) adopt a coiled-coil conformation. Phosphoserine occurs at positions 637 and 647. At threonine 649 the chain carries Phosphothreonine.

It belongs to the vinculin/alpha-catenin family. In terms of assembly, interacts with CTNNB1. Interacts with PKP2. In terms of tissue distribution, predominantly expressed in heart and testis. Expressed at lower levels in brain, kidney, liver and skeletal muscle.

The protein resides in the cytoplasm. It is found in the cytoskeleton. It localises to the cell junction. The protein localises to the desmosome. In terms of biological role, may be involved in formation of stretch-resistant cell-cell adhesion complexes. The sequence is that of Catenin alpha-3 from Homo sapiens (Human).